Here is a 275-residue protein sequence, read N- to C-terminus: Large ribosomal subunit protein uL2 (275 aa).

2 disordered regions span residues 36–55 (PKKR…RHKG) and 223–275 (VVMN…RHAR).

The protein belongs to the universal ribosomal protein uL2 family. Part of the 50S ribosomal subunit. Forms a bridge to the 30S subunit in the 70S ribosome.

Its function is as follows. One of the primary rRNA binding proteins. Required for association of the 30S and 50S subunits to form the 70S ribosome, for tRNA binding and peptide bond formation. It has been suggested to have peptidyltransferase activity; this is somewhat controversial. Makes several contacts with the 16S rRNA in the 70S ribosome. The polypeptide is Large ribosomal subunit protein uL2 (Thiobacillus denitrificans (strain ATCC 25259 / T1)).